We begin with the raw amino-acid sequence, 495 residues long: Meiosis-specific nuclear structural protein 1 (495 aa).

Positions 1–314 (MGSKRRNLSC…KLEEMLRQRE (314 aa)) are interaction with BBOF1. Positions 28-410 (VQALKNVNSQ…QLEHRRAVEK (383 aa)) form a coiled coil. Tyr188 is modified (phosphotyrosine).

The protein belongs to the MNS1 family. In terms of assembly, able to form oligomers. Microtubule inner protein component of sperm flagellar doublet microtubules. Interacts with ODAD1. Interacts with BBOF1. Expressed in nasal respiratory epithelium and in the sperm.

The protein resides in the nucleus. Its subcellular location is the cytoplasm. The protein localises to the cytoskeleton. It localises to the cilium axoneme. It is found in the flagellum axoneme. Microtubule inner protein (MIP) part of the dynein-decorated doublet microtubules (DMTs) in cilia axoneme, which is required for motile cilia beating. May play a role in the control of meiotic division and germ cell differentiation through regulation of pairing and recombination during meiosis. Required for sperm flagella assembly. May play a role in the assembly and function of the outer dynein arm-docking complex (ODA-DC). ODA-DC mediates outer dynein arms (ODA) binding onto the axonemal doublet microtubules. This chain is Meiosis-specific nuclear structural protein 1, found in Homo sapiens (Human).